The following is a 214-amino-acid chain: Guanylate kinase (214 aa).

Positions 12 to 191 constitute a Guanylate kinase-like domain; that stretch reads GLMLVMSSPS…SIAAVQAILA (180 aa). Residue 19 to 26 participates in ATP binding; the sequence is SPSGAGKT.

This sequence belongs to the guanylate kinase family.

The protein resides in the cytoplasm. The catalysed reaction is GMP + ATP = GDP + ADP. Functionally, essential for recycling GMP and indirectly, cGMP. The sequence is that of Guanylate kinase from Paramagnetospirillum magneticum (strain ATCC 700264 / AMB-1) (Magnetospirillum magneticum).